The chain runs to 287 residues: Pantothenate synthetase (287 aa).

ATP is bound at residue 30–37 (MGNLHDGH). Histidine 37 (proton donor) is an active-site residue. Glutamine 61 is a (R)-pantoate binding site. Glutamine 61 is a binding site for beta-alanine. 148-151 (GQKD) is a binding site for ATP. Glutamine 154 contacts (R)-pantoate. Residues isoleucine 177 and 185–188 (LSSR) contribute to the ATP site.

Belongs to the pantothenate synthetase family. In terms of assembly, homodimer.

It is found in the cytoplasm. The enzyme catalyses (R)-pantoate + beta-alanine + ATP = (R)-pantothenate + AMP + diphosphate + H(+). The protein operates within cofactor biosynthesis; (R)-pantothenate biosynthesis; (R)-pantothenate from (R)-pantoate and beta-alanine: step 1/1. Functionally, catalyzes the condensation of pantoate with beta-alanine in an ATP-dependent reaction via a pantoyl-adenylate intermediate. The polypeptide is Pantothenate synthetase (Psychrobacter cryohalolentis (strain ATCC BAA-1226 / DSM 17306 / VKM B-2378 / K5)).